Here is a 390-residue protein sequence, read N- to C-terminus: Transforming growth factor beta-1 proprotein (390 aa).

Positions 1-29 (MPPSGLRLLPLLLPLLWLLVLTPSRPAAG) are cleaved as a signal peptide. Residues 30–74 (LSTCKTIDMELVKRKRIETIRGQILSKLRLASPPSQGEVPPGPLP) form a straightjacket domain region. Residues 75 to 271 (EAVLALYNST…ATPLERAQHL (197 aa)) form an arm domain region. Asn-82, Asn-136, and Asn-176 each carry an N-linked (GlcNAc...) asparagine glycan. Positions 226–252 (DSKDNTLQVDINGFTTGRRGDLATIHG) are bowtie tail. The Cell attachment site motif lies at 244–246 (RGD). 4 disulfides stabilise this stretch: Cys-285–Cys-294, Cys-293–Cys-356, Cys-322–Cys-387, and Cys-326–Cys-389.

The protein belongs to the TGF-beta family. As to quaternary structure, homodimer; disulfide-linked. Interacts with the serine proteases, HTRA1 and HTRA3: the interaction with either inhibits TGFB1-mediated signaling and the HTRA protease activity is required for this inhibition. May interact with THSD4; this interaction may lead to sequestration by FBN1 microfibril assembly and attenuation of TGFB signaling. Interacts with CD109, DPT and ASPN. Interacts with EFEMP2. Interacts with TSKU; the interaction contributes to regulation of the hair cycle. Interacts with TGFBR3. Homodimer; disulfide-linked. Interacts with transforming growth factor beta-1 (TGF-beta-1) chain; interaction is non-covalent and maintains TGF-beta-1 in a latent state; each latency-associated peptide (LAP) monomer interacts with TGF-beta-1 in the other monomer. Interacts with LTBP1; leading to regulation of TGF-beta-1 activation. Interacts with LRRC32/GARP; leading to regulation of TGF-beta-1 activation on the surface of activated regulatory T-cells (Tregs). Interacts with LRRC33/NRROS; leading to regulation of TGF-beta-1 activation in macrophages and microglia. Interacts (via cell attachment site) with integrins ITGAV and ITGB6 (ITGAV:ITGB6), leading to release of the active TGF-beta-1. Interacts with NREP; the interaction results in a decrease in TGFB1 autoinduction. Interacts with HSP90AB1; inhibits latent TGFB1 activation. In terms of assembly, homodimer; disulfide-linked. Interacts with TGF-beta receptors (TGFBR1 and TGFBR2), leading to signal transduction. Post-translationally, transforming growth factor beta-1 proprotein: The precursor proprotein is cleaved in the Golgi apparatus by FURIN to form Transforming growth factor beta-1 (TGF-beta-1) and Latency-associated peptide (LAP) chains, which remain non-covalently linked, rendering TGF-beta-1 inactive. N-glycosylated. Deglycosylation leads to activation of Transforming growth factor beta-1 (TGF-beta-1); mechanisms triggering deglycosylation-driven activation of TGF-beta-1 are however unclear.

The protein localises to the secreted. It is found in the extracellular space. Its subcellular location is the extracellular matrix. Transforming growth factor beta-1 proprotein: Precursor of the Latency-associated peptide (LAP) and Transforming growth factor beta-1 (TGF-beta-1) chains, which constitute the regulatory and active subunit of TGF-beta-1, respectively. Its function is as follows. Required to maintain the Transforming growth factor beta-1 (TGF-beta-1) chain in a latent state during storage in extracellular matrix. Associates non-covalently with TGF-beta-1 and regulates its activation via interaction with 'milieu molecules', such as LTBP1, LRRC32/GARP and LRRC33/NRROS, that control activation of TGF-beta-1. Interaction with LRRC33/NRROS regulates activation of TGF-beta-1 in macrophages and microglia. Interaction with LRRC32/GARP controls activation of TGF-beta-1 on the surface of activated regulatory T-cells (Tregs). Interaction with integrins (ITGAV:ITGB6 or ITGAV:ITGB8) results in distortion of the Latency-associated peptide chain and subsequent release of the active TGF-beta-1. In terms of biological role, multifunctional protein that regulates the growth and differentiation of various cell types and is involved in various processes, such as normal development, immune function, microglia function and responses to neurodegeneration. Activation into mature form follows different steps: following cleavage of the proprotein in the Golgi apparatus, Latency-associated peptide (LAP) and Transforming growth factor beta-1 (TGF-beta-1) chains remain non-covalently linked rendering TGF-beta-1 inactive during storage in extracellular matrix. At the same time, LAP chain interacts with 'milieu molecules', such as LTBP1, LRRC32/GARP and LRRC33/NRROS that control activation of TGF-beta-1 and maintain it in a latent state during storage in extracellular milieus. TGF-beta-1 is released from LAP by integrins (ITGAV:ITGB6 or ITGAV:ITGB8): integrin-binding to LAP stabilizes an alternative conformation of the LAP bowtie tail and results in distortion of the LAP chain and subsequent release of the active TGF-beta-1. Once activated following release of LAP, TGF-beta-1 acts by binding to TGF-beta receptors (TGFBR1 and TGFBR2), which transduce signal. While expressed by many cells types, TGF-beta-1 only has a very localized range of action within cell environment thanks to fine regulation of its activation by Latency-associated peptide chain (LAP) and 'milieu molecules'. Plays an important role in bone remodeling: acts as a potent stimulator of osteoblastic bone formation, causing chemotaxis, proliferation and differentiation in committed osteoblasts. Can promote either T-helper 17 cells (Th17) or regulatory T-cells (Treg) lineage differentiation in a concentration-dependent manner. At high concentrations, leads to FOXP3-mediated suppression of RORC and down-regulation of IL-17 expression, favoring Treg cell development. At low concentrations in concert with IL-6 and IL-21, leads to expression of the IL-17 and IL-23 receptors, favoring differentiation to Th17 cells. Stimulates sustained production of collagen through the activation of CREB3L1 by regulated intramembrane proteolysis (RIP). Mediates SMAD2/3 activation by inducing its phosphorylation and subsequent translocation to the nucleus. Positively regulates odontoblastic differentiation in dental papilla cells, via promotion of IPO7-mediated translocation of phosphorylated SMAD2 to the nucleus and subsequent transcription of target genes. Can induce epithelial-to-mesenchymal transition (EMT) and cell migration in various cell types. This Chlorocebus aethiops (Green monkey) protein is Transforming growth factor beta-1 proprotein (TGFB1).